The sequence spans 273 residues: Putative peptidyl-prolyl cis-trans isomerase Cbf2 (273 aa).

Residues 1–21 form the signal peptide; it reads MKKFSLVAATLIAGVVLNVNA. In terms of domain architecture, PpiC spans 131 to 228; the sequence is PARVQAKHIL…FGYHVILKEN (98 aa).

It catalyses the reaction [protein]-peptidylproline (omega=180) = [protein]-peptidylproline (omega=0). The chain is Putative peptidyl-prolyl cis-trans isomerase Cbf2 (cbf2) from Campylobacter jejuni subsp. jejuni serotype O:2 (strain ATCC 700819 / NCTC 11168).